Here is a 497-residue protein sequence, read N- to C-terminus: Long chain base biosynthesis protein 2c (497 aa).

A helical membrane pass occupies residues 4–24 (VPFVTAVTTVFSYGVIFGFGH). Lys-319 is subject to N6-(pyridoxal phosphate)lysine.

This sequence belongs to the class-II pyridoxal-phosphate-dependent aminotransferase family. As to quaternary structure, heterodimer with LCB1. Component of the serine palmitoyltransferase (SPT) complex, composed of LCB1 and LCB2. Requires pyridoxal 5'-phosphate as cofactor.

It localises to the endoplasmic reticulum membrane. It catalyses the reaction L-serine + hexadecanoyl-CoA + H(+) = 3-oxosphinganine + CO2 + CoA. It functions in the pathway lipid metabolism; sphingolipid metabolism. In terms of biological role, serine palmitoyltransferase (SPT). The heterodimer formed with LCB1 constitutes the catalytic core. In Oryza sativa subsp. japonica (Rice), this protein is Long chain base biosynthesis protein 2c.